Consider the following 200-residue polypeptide: Large ribosomal subunit protein bL25 (200 aa).

It belongs to the bacterial ribosomal protein bL25 family. CTC subfamily. As to quaternary structure, part of the 50S ribosomal subunit; part of the 5S rRNA/L5/L18/L25 subcomplex. Contacts the 5S rRNA. Binds to the 5S rRNA independently of L5 and L18.

In terms of biological role, this is one of the proteins that binds to the 5S RNA in the ribosome where it forms part of the central protuberance. The chain is Large ribosomal subunit protein bL25 from Caldicellulosiruptor bescii (strain ATCC BAA-1888 / DSM 6725 / KCTC 15123 / Z-1320) (Anaerocellum thermophilum).